Here is a 289-residue protein sequence, read N- to C-terminus: Proteasome assembly chaperone 1 (289 aa).

Positions 1–38 (MAATFFGEVVKAPCRAGTEEEEEEEEQSRRDTPEDREV) are disordered. Ala-2 carries the post-translational modification N-acetylalanine. A Phosphothreonine modification is found at Thr-18. The segment covering 27 to 38 (QSRRDTPEDREV) has biased composition (basic and acidic residues). Phosphothreonine is present on Thr-55. Phosphoserine is present on Ser-181. Lys-265 is subject to N6-acetyllysine.

This sequence belongs to the PSMG1 family. As to quaternary structure, forms a heterodimer with PSMG2. The PSMG1-PSMG2 heterodimer interacts directly with the PSMA5 and PSMA7 proteasome alpha subunits. Degraded by the proteasome upon completion of 20S proteasome maturation. Highly expressed in testis with moderate expression in brain, liver and kidney and low levels in heart, skeletal muscle and pancreas.

It is found in the cytoplasm. The protein localises to the endoplasmic reticulum. Its function is as follows. Chaperone protein which promotes assembly of the 20S proteasome as part of a heterodimer with PSMG2. The PSMG1-PSMG2 heterodimer binds to the PSMA5 and PSMA7 proteasome subunits, promotes assembly of the proteasome alpha subunits into the heteroheptameric alpha ring and prevents alpha ring dimerization. The chain is Proteasome assembly chaperone 1 from Mus musculus (Mouse).